The primary structure comprises 223 residues: Lipoprotein-releasing system ATP-binding protein LolD (223 aa).

Residues methionine 1–alanine 223 form the ABC transporter domain. Glycine 32–serine 39 is a binding site for ATP.

Belongs to the ABC transporter superfamily. Lipoprotein translocase (TC 3.A.1.125) family. In terms of assembly, the complex is composed of two ATP-binding proteins (LolD) and two transmembrane proteins (LolC and LolE).

The protein resides in the cell inner membrane. Part of the ABC transporter complex LolCDE involved in the translocation of mature outer membrane-directed lipoproteins, from the inner membrane to the periplasmic chaperone, LolA. Responsible for the formation of the LolA-lipoprotein complex in an ATP-dependent manner. In Koribacter versatilis (strain Ellin345), this protein is Lipoprotein-releasing system ATP-binding protein LolD.